The following is a 128-amino-acid chain: Aspartate 1-decarboxylase (128 aa).

Ser25 acts as the Schiff-base intermediate with substrate; via pyruvic acid in catalysis. Pyruvic acid (Ser) is present on Ser25. Thr57 is a binding site for substrate. Tyr58 serves as the catalytic Proton donor. 73–75 (GAA) is a binding site for substrate.

It belongs to the PanD family. In terms of assembly, heterooctamer of four alpha and four beta subunits. Requires pyruvate as cofactor. Is synthesized initially as an inactive proenzyme, which is activated by self-cleavage at a specific serine bond to produce a beta-subunit with a hydroxyl group at its C-terminus and an alpha-subunit with a pyruvoyl group at its N-terminus.

It localises to the cytoplasm. It catalyses the reaction L-aspartate + H(+) = beta-alanine + CO2. It participates in cofactor biosynthesis; (R)-pantothenate biosynthesis; beta-alanine from L-aspartate: step 1/1. Functionally, catalyzes the pyruvoyl-dependent decarboxylation of aspartate to produce beta-alanine. This is Aspartate 1-decarboxylase from Chlorobium luteolum (strain DSM 273 / BCRC 81028 / 2530) (Pelodictyon luteolum).